We begin with the raw amino-acid sequence, 430 residues long: Histidinol dehydrogenase (430 aa).

The NAD(+) site is built by tyrosine 131, glutamine 192, and asparagine 215. 3 residues coordinate substrate: serine 238, glutamine 260, and histidine 263. Zn(2+)-binding residues include glutamine 260 and histidine 263. Catalysis depends on proton acceptor residues glutamate 328 and histidine 329. The substrate site is built by histidine 329, aspartate 362, glutamate 416, and histidine 421. Aspartate 362 lines the Zn(2+) pocket. Residue histidine 421 coordinates Zn(2+).

Belongs to the histidinol dehydrogenase family. Requires Zn(2+) as cofactor.

It catalyses the reaction L-histidinol + 2 NAD(+) + H2O = L-histidine + 2 NADH + 3 H(+). It participates in amino-acid biosynthesis; L-histidine biosynthesis; L-histidine from 5-phospho-alpha-D-ribose 1-diphosphate: step 9/9. Its function is as follows. Catalyzes the sequential NAD-dependent oxidations of L-histidinol to L-histidinaldehyde and then to L-histidine. This Acinetobacter baylyi (strain ATCC 33305 / BD413 / ADP1) protein is Histidinol dehydrogenase.